Here is a 298-residue protein sequence, read N- to C-terminus: Putative cysteine protease YopT-like blr2058 (298 aa).

Over residues 1-14 (MYNRVDGEYAHTEQ) the composition is skewed to basic and acidic residues. 2 disordered regions span residues 1-25 (MYNRVDGEYAHTEQAEESSWPADGS) and 59-80 (SDAIDDSSNTSGLSTSSLSSSS). Over residues 65-80 (SSNTSGLSTSSLSSSS) the composition is skewed to low complexity. Cysteine 109 is a catalytic residue. The span at 137–162 (NHRSAARRQEQSEKLKTQLKEDKAEG) shows a compositional bias: basic and acidic residues. Positions 137-166 (NHRSAARRQEQSEKLKTQLKEDKAEGSHNF) are disordered. Active-site residues include histidine 223 and aspartate 238.

The protein belongs to the peptidase C58 family.

Potential cysteine protease, which may play a central role after invasion of host cell. This is Putative cysteine protease YopT-like blr2058 from Bradyrhizobium diazoefficiens (strain JCM 10833 / BCRC 13528 / IAM 13628 / NBRC 14792 / USDA 110).